Here is a 314-residue protein sequence, read N- to C-terminus: Nodulation protein D 1 (314 aa).

Residues 6–63 (LDLNLLVALDALMTERNLTAAARSINLSQPAMSAAVGRLRTYFNDDLFTMVGRELVPT) enclose the HTH lysR-type domain. The H-T-H motif DNA-binding region spans 23 to 42 (LTAAARSINLSQPAMSAAVG).

This sequence belongs to the LysR transcriptional regulatory family.

NodD regulates the expression of the nodABCFE genes which encode other nodulation proteins. NodD is also a negative regulator of its own expression. Binds flavonoids as inducers. The chain is Nodulation protein D 1 (nodD1) from Rhizobium leguminosarum bv. phaseoli.